The following is a 156-amino-acid chain: Endoribonuclease YbeY (156 aa).

His-122, His-126, and His-132 together coordinate Zn(2+).

The protein belongs to the endoribonuclease YbeY family. Zn(2+) is required as a cofactor.

It localises to the cytoplasm. Single strand-specific metallo-endoribonuclease involved in late-stage 70S ribosome quality control and in maturation of the 3' terminus of the 16S rRNA. The sequence is that of Endoribonuclease YbeY from Bacillus cereus (strain B4264).